We begin with the raw amino-acid sequence, 206 residues long: Large ribosomal subunit protein uL22m (206 aa).

A mitochondrion-targeting transit peptide spans 1 to 40 (MAAALLRELGALRVPNLRIWATQTLRVLPPSCIHTSASLD).

The protein belongs to the universal ribosomal protein uL22 family. In terms of assembly, component of the mitochondrial ribosome large subunit (39S) which comprises a 16S rRNA and about 50 distinct proteins.

It is found in the mitochondrion. The sequence is that of Large ribosomal subunit protein uL22m (Mrpl22) from Mus musculus (Mouse).